The sequence spans 553 residues: Fusion glycoprotein F0 (553 aa).

The N-terminal stretch at 1–31 is a signal peptide; the sequence is MGSRSSTRIPVPLMLTVRVALALSCVCPTSS. The Extracellular segment spans residues 32–500; that stretch reads LDGRPLAAAG…VNVKLTSTSA (469 aa). 4 disulfide bridges follow: C76/C199, C338/C347, C362/C370, and C394/C399. An N-linked (GlcNAc...) asparagine; by host glycan is attached at N85. The segment at 117–141 is fusion peptide; that stretch reads LIGAIIGGAALGVATAAQITAASAL. A coiled-coil region spans residues 142-170; the sequence is ILANQNAANILRLKESIAATNEAVHEVTD. Residue N191 is glycosylated (N-linked (GlcNAc...) asparagine; by host). The N-linked (GlcNAc...) asparagine; by host glycan is linked to N366. N-linked (GlcNAc...) asparagine; by host glycosylation is found at N447 and N471. Residues 466–491 adopt a coiled-coil conformation; it reads ELGNVNNSISNALDKLEESNSKLDKV. Residues 501–521 form a helical membrane-spanning segment; sequence LITYIVLTVISLVCGILSLVL. Residues 522 to 553 lie on the Cytoplasmic side of the membrane; sequence ACYLMYKQKAQQKTLLWLGNNTLDQMRATTKM. C523 carries S-palmitoyl cysteine; by host lipidation.

This sequence belongs to the paramyxoviruses fusion glycoprotein family. Homotrimer of disulfide-linked F1-F2. The inactive precursor F0 is glycosylated and proteolytically cleaved into F1 and F2 to be functionally active. The cleavage is mediated by cellular proteases during the transport and maturation of the polypeptide.

The protein resides in the virion membrane. It localises to the host cell membrane. Its function is as follows. Class I viral fusion protein. Under the current model, the protein has at least 3 conformational states: pre-fusion native state, pre-hairpin intermediate state, and post-fusion hairpin state. During viral and plasma cell membrane fusion, the heptad repeat (HR) regions assume a trimer-of-hairpins structure, positioning the fusion peptide in close proximity to the C-terminal region of the ectodomain. The formation of this structure appears to drive apposition and subsequent fusion of viral and plasma cell membranes. Directs fusion of viral and cellular membranes leading to delivery of the nucleocapsid into the cytoplasm. This fusion is pH independent and occurs directly at the outer cell membrane. The trimer of F1-F2 (F protein) probably interacts with HN at the virion surface. Upon HN binding to its cellular receptor, the hydrophobic fusion peptide is unmasked and interacts with the cellular membrane, inducing the fusion between cell and virion membranes. Later in infection, F proteins expressed at the plasma membrane of infected cells could mediate fusion with adjacent cells to form syncytia, a cytopathic effect that could lead to tissue necrosis. In Gallus gallus (Chicken), this protein is Fusion glycoprotein F0 (F).